A 125-amino-acid chain; its full sequence is Small ribosomal subunit protein eS8 (125 aa).

The protein belongs to the eukaryotic ribosomal protein eS8 family. Part of the 30S ribosomal subunit.

The protein is Small ribosomal subunit protein eS8 of Methanosarcina acetivorans (strain ATCC 35395 / DSM 2834 / JCM 12185 / C2A).